The chain runs to 124 residues: Orexigenic neuropeptide QRFP (124 aa).

The N-terminal stretch at 1–17 (MRGFRPLLSLLLPLSAC) is a signal peptide. Positions 18-79 (FPLLDRRGPT…REHTGFRLGR (62 aa)) are excised as a propeptide. Residues 63 to 101 (REQQASHREHTGFRLGRQDGSSEAAGFLPADSEKASGPL) are disordered. Phenylalanine amide is present on F122.

This sequence belongs to the RFamide neuropeptide family. Ligand for the G-protein coupled receptor QRFPR/GPR103. In terms of tissue distribution, expressed in the brain with highest levels in the periventricular hypothalamic nucleus and lateral hypothalamic areas. Expressed at moderate levels in the adrenal gland, eye, heart, intestine, liver, lung, kidney, mesenteric lymph node, ovary, placenta, Peyer patches, skin, spleen, stomach, testis, thymus and uterus.

The protein localises to the secreted. Stimulates feeding and grooming behavior, metabolic rate and locomotor activity and increases blood pressure. May have orexigenic activity. May promote aldosterone secretion by the adrenal gland. The chain is Orexigenic neuropeptide QRFP from Mus musculus (Mouse).